A 296-amino-acid chain; its full sequence is Ribosomal protein L11 methyltransferase (296 aa).

S-adenosyl-L-methionine-binding residues include Thr-151, Gly-172, Asp-194, and Asn-233.

Belongs to the methyltransferase superfamily. PrmA family.

The protein resides in the cytoplasm. The enzyme catalyses L-lysyl-[protein] + 3 S-adenosyl-L-methionine = N(6),N(6),N(6)-trimethyl-L-lysyl-[protein] + 3 S-adenosyl-L-homocysteine + 3 H(+). Methylates ribosomal protein L11. In Dechloromonas aromatica (strain RCB), this protein is Ribosomal protein L11 methyltransferase.